We begin with the raw amino-acid sequence, 258 residues long: UPF0246 protein HS_0482 (258 aa).

The protein belongs to the UPF0246 family.

The chain is UPF0246 protein HS_0482 from Histophilus somni (strain 129Pt) (Haemophilus somnus).